A 578-amino-acid chain; its full sequence is Cyclin-SDS (578 aa).

The tract at residues 1–31 is disordered; that stretch reads MKEIAMRNSKRKPEPTPFAGKKLRSTRLRRK. Residues 21 to 31 show a composition bias toward basic residues; sequence KKLRSTRLRRK.

Belongs to the cyclin family. As to quaternary structure, may interact with CDKA-1 and CDKB1-1.

Functionally, meiosis-specific cyclin. Required for normal homolog synapsis and recombination in early to mid-prophase 1. May regulate the timing of sister chromatid separation. This is Cyclin-SDS (SDS) from Arabidopsis thaliana (Mouse-ear cress).